We begin with the raw amino-acid sequence, 180 residues long: Nucleoside-triphosphatase THEP1 (180 aa).

ATP is bound by residues 18-25 (GRPGVGKT) and 104-111 (LVIMDEIG).

This sequence belongs to the THEP1 NTPase family.

The catalysed reaction is a ribonucleoside 5'-triphosphate + H2O = a ribonucleoside 5'-diphosphate + phosphate + H(+). Functionally, has nucleotide phosphatase activity towards ATP, GTP, CTP, TTP and UTP. May hydrolyze nucleoside diphosphates with lower efficiency. The chain is Nucleoside-triphosphatase THEP1 from Metallosphaera sedula (strain ATCC 51363 / DSM 5348 / JCM 9185 / NBRC 15509 / TH2).